The following is a 609-amino-acid chain: RAS guanyl-releasing protein 2 (609 aa).

Ala-2 carries N-myristoyl glycine lipidation. The N-terminal Ras-GEF domain maps to 4–126; sequence TLDLDKGCTV…SLIDIDSVPT (123 aa). The S-palmitoyl cysteine moiety is linked to residue Leu-7. Residues Ser-116, Ser-117, and Ser-147 each carry the phosphoserine modification. Positions 154-387 constitute a Ras-GEF domain; the sequence is EPMELAEHLT…YQLSLQREPR (234 aa). Residues 382–406 form a disordered region; it reads LQREPRSKSSPTSPTSCTPPPRPPV. 2 consecutive EF-hand domains span residues 426–461 and 455–490; these read HIEKMVESVFRNFDVDGDGHISQEEFQIIRGNFPYL and RGNFPYLSAFGDLDQNQDGCISREEMVSYFLRSSSV. Residues Asp-439, Asp-441, Asp-443, His-445, Glu-450, Asp-468, Asn-470, Asp-472, Cys-474, and Glu-479 each contribute to the Ca(2+) site. The Phorbol-ester/DAG-type zinc-finger motif lies at 498–548; the sequence is VHNFQESNSLRPVACRHCKALILGIYKQGLKCRACGVNCHKQCKDRLSVEC. A phosphoserine mark is found at Ser-554 and Ser-576. Residues 557–592 are disordered; sequence LEGSAPSPSPMHSHHHRAFSFSLPRPGRRGSRPPEI.

This sequence belongs to the RASGRP family. As to quaternary structure, forms a signaling complex with RAP1 and BRAF. Interacts with RAP1. Interacts with F-actin. In terms of processing, isoform 2 is palmitoylated and myristoylated. In terms of tissue distribution, detected in platelets, neutrophils and T lymphocytes (at protein level). Expressed in brain where it is enriched in the striatum. Also expressed in the hematopoietic system. Detected in heart, brain, lung, placenta, liver, skeletal muscle and kidney.

It is found in the cytoplasm. The protein resides in the cytosol. The protein localises to the cell membrane. It localises to the synapse. Its subcellular location is the synaptosome. It is found in the cell projection. The protein resides in the ruffle membrane. Its activity is regulated as follows. Isoform 1 and isoform 2 are differently regulated by calcium and DAG. Functionally, functions as a calcium- and DAG-regulated nucleotide exchange factor specifically activating Rap through the exchange of bound GDP for GTP. May also activate other GTPases such as RRAS, RRAS2, NRAS, KRAS but not HRAS. Functions in aggregation of platelets and adhesion of T-lymphocytes and neutrophils probably through inside-out integrin activation. May function in the muscarinic acetylcholine receptor M1/CHRM1 signaling pathway. The chain is RAS guanyl-releasing protein 2 (RASGRP2) from Homo sapiens (Human).